Reading from the N-terminus, the 442-residue chain is tRNA-2-methylthio-N(6)-dimethylallyladenosine synthase (442 aa).

The region spanning 6 to 122 (RKFYIHTFGC…LPALIAEAGD (117 aa)) is the MTTase N-terminal domain. Positions 15, 51, 85, 157, 161, and 164 each coordinate [4Fe-4S] cluster. The Radical SAM core domain occupies 143–373 (RTQSLNAFVP…IDLQNGISAE (231 aa)). In terms of domain architecture, TRAM spans 376 to 439 (GLAPGSVVEV…SATLFGQSAE (64 aa)).

It belongs to the methylthiotransferase family. MiaB subfamily. In terms of assembly, monomer. It depends on [4Fe-4S] cluster as a cofactor.

The protein localises to the cytoplasm. It catalyses the reaction N(6)-dimethylallyladenosine(37) in tRNA + (sulfur carrier)-SH + AH2 + 2 S-adenosyl-L-methionine = 2-methylsulfanyl-N(6)-dimethylallyladenosine(37) in tRNA + (sulfur carrier)-H + 5'-deoxyadenosine + L-methionine + A + S-adenosyl-L-homocysteine + 2 H(+). In terms of biological role, catalyzes the methylthiolation of N6-(dimethylallyl)adenosine (i(6)A), leading to the formation of 2-methylthio-N6-(dimethylallyl)adenosine (ms(2)i(6)A) at position 37 in tRNAs that read codons beginning with uridine. The sequence is that of tRNA-2-methylthio-N(6)-dimethylallyladenosine synthase from Chlorobium phaeobacteroides (strain DSM 266 / SMG 266 / 2430).